Here is a 385-residue protein sequence, read N- to C-terminus: 8-amino-7-oxononanoate synthase (385 aa).

Arg21 is a substrate binding site. Gly108 to Phe109 provides a ligand contact to pyridoxal 5'-phosphate. His133 contacts substrate. Residues Ser179, His207, and Thr233 each coordinate pyridoxal 5'-phosphate. N6-(pyridoxal phosphate)lysine is present on Lys236. Thr352 contacts substrate.

Belongs to the class-II pyridoxal-phosphate-dependent aminotransferase family. BioF subfamily. Homodimer. It depends on pyridoxal 5'-phosphate as a cofactor.

It catalyses the reaction 6-carboxyhexanoyl-[ACP] + L-alanine + H(+) = (8S)-8-amino-7-oxononanoate + holo-[ACP] + CO2. It participates in cofactor biosynthesis; biotin biosynthesis. Its function is as follows. Catalyzes the decarboxylative condensation of pimeloyl-[acyl-carrier protein] and L-alanine to produce 8-amino-7-oxononanoate (AON), [acyl-carrier protein], and carbon dioxide. This chain is 8-amino-7-oxononanoate synthase, found in Salmonella typhimurium (strain LT2 / SGSC1412 / ATCC 700720).